Here is a 1012-residue protein sequence, read N- to C-terminus: MSGDYANYTVLMPPTPDNQPSGGAPPAAPSAGGARPGDLPLPPYGSSSSSRLVNRRGGGDDGAKMDRRLSTARVPAPSSNKSLLVRSQTGDFDHNRWLFETKGTYGIGNAYWPQDNVYGDDGGGGAVKMEDLVEKPWKPLSRKVPIPPGILSPYRLLVLVRFVALFLFLVWRVTNPNMDALWLWGISIVCEFWFAFSWLLDQMPKLNPINRAADLAALKEKFESPSPTNPTGRSDLPGLDVFISTADPYKEPTLVTANTLLSILATEYPVEKLFVYISDDGGALLTFESMAEACAFAKVWVPFCRKHSIEPRNPDSYFTQKGDPTKGKKRPDFVKDRRWIKREYDEFKIRVNSLPDLIRRRANALNARERKLARDKQAAGDADALASVKAATWMADGTHWPGTWLDPSPDHAKGDHASIVQVMIKNPHHDVVYGEAGDHPYLDMTDVDMRIPMFAYLSREKRAGYDHNKKAGAMNAMVRASAILSNGPFMLNFDCDHYIYNCQAIREAMCYMLDRGGDRICYIQFPQRFEGIDPSDRYANHNTVFFDGNMRALDGLQGPMYVGTGCLFRRYAIYGFNPPRAIEYRGTYGQTKVPIDPRQGSEAMPGAGGGRSGGGSVGGDHELQALSTAHPDHEAPQKFGKSKMFIESIAVAEYQGRPLQDHPSVLNGRPPGALLMPRPPLDAATVAESVSVISCWYEDNTEWGQRVGWIYGSVTEDVVTGYRMHNRGWRSVYCITRRDAFRGTAPINLTDRLHQVLRWATGSVEIFFSKNNAVLASRRLKFLQRMAYLNVGIYPFTSLFLIMYCLLPALSLFSGQFIVATLDPTFLSYLLLITITLMLLCLLEVKWSGIGLEEWWRNEQFWVIGGTSAHLAAVLQGLLKVVAGIEISFTLTAKAAAEDDDDPFAELYLIKWTSLFIPPLAVIGINIIALVVGVSRTVYAEIPQYSKLLGGGFFSFWVLAHYYPFAKGLMGRRGRTPTIVYVWAGLISITVSLLWITISPPDDSVAQGGIDV.

The tract at residues 1–85 is disordered; sequence MSGDYANYTV…APSSNKSLLV (85 aa). A compositionally biased stretch (low complexity) spans 20–37; it reads PSGGAPPAAPSAGGARPG. Residues 57–69 show a composition bias toward basic and acidic residues; sequence GGGDDGAKMDRRL. 2 helical membrane-spanning segments follow: residues 150 to 170 and 180 to 200; these read ILSP…LFLV and ALWL…SWLL. The active site involves Asp-280. The tract at residues 597 to 620 is disordered; that stretch reads PRQGSEAMPGAGGGRSGGGSVGGD. Residues 606 to 618 show a composition bias toward gly residues; the sequence is GAGGGRSGGGSVG. Asp-717 is a catalytic residue. A run of 6 helical transmembrane segments spans residues 799 to 819, 825 to 845, 871 to 891, 914 to 934, 948 to 968, and 978 to 998; these read LFLI…QFIV, TFLS…LLEV, LAAV…SFTL, SLFI…VVGV, LLGG…FAKG, and TIVY…WITI.

Belongs to the glycosyltransferase 2 family. Plant cellulose synthase-like D subfamily.

Its subcellular location is the golgi apparatus membrane. Its function is as follows. Thought to be a Golgi-localized beta-glycan synthase that polymerize the backbones of noncellulosic polysaccharides (hemicelluloses) of plant cell wall. In Oryza sativa subsp. indica (Rice), this protein is Putative cellulose synthase-like protein D5 (CSLD5).